The primary structure comprises 374 residues: DNA replication and repair protein RecF (374 aa).

An ATP-binding site is contributed by 30 to 37 (GENAQGKT).

Belongs to the RecF family.

It is found in the cytoplasm. Functionally, the RecF protein is involved in DNA metabolism; it is required for DNA replication and normal SOS inducibility. RecF binds preferentially to single-stranded, linear DNA. It also seems to bind ATP. The polypeptide is DNA replication and repair protein RecF (Lactiplantibacillus plantarum (strain ATCC BAA-793 / NCIMB 8826 / WCFS1) (Lactobacillus plantarum)).